The following is a 643-amino-acid chain: SURP and G-patch domain-containing protein 1 (643 aa).

2 disordered regions span residues A48–E69 and K97–K119. At T128 the chain carries Phosphothreonine. The SURP motif 1 repeat unit spans residues V187 to Y229. At S252 the chain carries Phosphoserine. Residues L262–Y305 form an SURP motif 2 repeat. Disordered stretches follow at residues K316 to K335 and A360 to E393. At S322 the chain carries Phosphoserine. The short motif at K378–R384 is the Nuclear localization signal element. S407, S409, S412, and S483 each carry phosphoserine. One can recognise a G-patch domain in the interval V560–P607.

As to quaternary structure, component of the spliceosome.

The protein localises to the nucleus. Its function is as follows. Plays a role in pre-mRNA splicing. The chain is SURP and G-patch domain-containing protein 1 (Sugp1) from Mus musculus (Mouse).